Reading from the N-terminus, the 588-residue chain is NADP-dependent malic enzyme 3 (588 aa).

Glycine 2 is modified (N-acetylglycine). The Proton donor role is filled by tyrosine 136. Arginine 189 contributes to the NADP(+) binding site. Lysine 207 (proton acceptor) is an active-site residue. Glutamate 279, aspartate 280, and aspartate 303 together coordinate a divalent metal cation. NADP(+) is bound by residues aspartate 303, 332 to 348, and asparagine 444; that span reads LFLG…ELIA.

The protein belongs to the malic enzymes family. As to quaternary structure, homohexamers and homooctamers. Mg(2+) serves as cofactor. Mn(2+) is required as a cofactor. As to expression, mostly expressed in flowers, and, to a lower extent, in stems. In leaves and stems, restricted to the trichomes and trichome basal cells. Also present in the stipules flanking the base of the inflorescence bract leaves and in the meristematic zone of developing lateral roots. In flowers, present in pollen and the abscission zone of developing siliques.

It is found in the cytoplasm. It catalyses the reaction (S)-malate + NADP(+) = pyruvate + CO2 + NADPH. The enzyme catalyses oxaloacetate + H(+) = pyruvate + CO2. With respect to regulation, slightly activated by succinate and aspartate. Repressed by fumarate, malate, oxaloacetate and glucose. The chain is NADP-dependent malic enzyme 3 (NADP-ME3) from Arabidopsis thaliana (Mouse-ear cress).